The following is a 101-amino-acid chain: Large ribosomal subunit protein uL24 (101 aa).

This sequence belongs to the universal ribosomal protein uL24 family. As to quaternary structure, part of the 50S ribosomal subunit.

Functionally, one of two assembly initiator proteins, it binds directly to the 5'-end of the 23S rRNA, where it nucleates assembly of the 50S subunit. Its function is as follows. One of the proteins that surrounds the polypeptide exit tunnel on the outside of the subunit. The sequence is that of Large ribosomal subunit protein uL24 from Clostridioides difficile (strain 630) (Peptoclostridium difficile).